The primary structure comprises 335 residues: CTD kinase subunit beta (335 aa).

2 consecutive Cyclin N-terminal domains span residues 26-151 (ILST…CFDF) and 158-241 (NYMV…LYMH). Residues 269–293 (KNSGRPQKPPQIDPHSSSLADEYRE) form a disordered region.

Belongs to the cyclin family. As to quaternary structure, CTDK-I consists of three subunits, ctk1/lsk1, ctk2/lsc1 and ctk3 (also called alpha, beta and gamma). Interacts with ctk1/lsk1. This interaction is dependent on ctk1/lsk1 kinase activity.

Its subcellular location is the cytoplasm. The protein localises to the nucleus. In terms of biological role, cyclin subunit of the CTDK-I complex, which hyperphosphorylates the C-terminal heptapeptide repeat domain (CTD) of the largest RNA polymerase II subunit. As part of the CTDK-I complex, involved in RNA polymerase II transcriptional elongation and pre-mRNA 3'-end processing. Together with ctk3, required for ctk1/lsk1 CTD kinase activation. Together with ctk1/lsk1, required for the regulation of cytokinesis by phosphorylating 'Ser-2' residues found in the heptad repeats of the CTD. The sequence is that of CTD kinase subunit beta (lsc1) from Schizosaccharomyces pombe (strain 972 / ATCC 24843) (Fission yeast).